Consider the following 501-residue polypeptide: Probable cytosol aminopeptidase (501 aa).

Residues Lys-272 and Asp-277 each coordinate Mn(2+). Lys-284 is a catalytic residue. Mn(2+)-binding residues include Asp-295, Asp-354, and Glu-356. The active site involves Arg-358.

This sequence belongs to the peptidase M17 family. The cofactor is Mn(2+).

It is found in the cytoplasm. The enzyme catalyses Release of an N-terminal amino acid, Xaa-|-Yaa-, in which Xaa is preferably Leu, but may be other amino acids including Pro although not Arg or Lys, and Yaa may be Pro. Amino acid amides and methyl esters are also readily hydrolyzed, but rates on arylamides are exceedingly low.. It carries out the reaction Release of an N-terminal amino acid, preferentially leucine, but not glutamic or aspartic acids.. Presumably involved in the processing and regular turnover of intracellular proteins. Catalyzes the removal of unsubstituted N-terminal amino acids from various peptides. The protein is Probable cytosol aminopeptidase of Buchnera aphidicola subsp. Baizongia pistaciae (strain Bp).